Consider the following 134-residue polypeptide: Methylmalonyl-CoA decarboxylase subunit gamma (134 aa).

The segment covering 28–38 (APAARPAAAPA) has biased composition (low complexity). The tract at residues 28–67 (APAARPAAAPAPAAPKPAAAPAPAPAPKTTAAGAGAGANT) is disordered. Over residues 39 to 53 (PAAPKPAAAPAPAPA) the composition is skewed to pro residues. Low complexity predominate over residues 54–67 (PKTTAAGAGAGANT). One can recognise a Biotinyl-binding domain in the interval 58 to 134 (AAGAGAGANT…NAGDILVVLS (77 aa)). Lys-100 is modified (N6-biotinyllysine).

In terms of assembly, the methylmalonyl-CoA decarboxylase is composed of four subunits: the carboxyltransferase alpha subunit (MmdA), the tunnel beta subunit (MmdB), the biotin-containing gamma subunit (MmdC) and the delta subunit (MmdD). The cofactor is biotin.

It is found in the cell membrane. The catalysed reaction is (S)-methylmalonyl-CoA + Na(+)(in) + H(+)(out) = propanoyl-CoA + Na(+)(out) + CO2. Its function is as follows. Biotin-containing subunit of the sodium ion pump methylmalonyl-CoA decarboxylase, which converts the chemical energy of a decarboxylation reaction into an electrochemical gradient of Na(+) ions across the cytoplasmic membrane, thereby creating a sodium ion motive force that is used for ATP synthesis. The sequence is that of Methylmalonyl-CoA decarboxylase subunit gamma from Propionigenium modestum.